The sequence spans 156 residues: MPRRRVVAKRKILPDPKFQDRLVTKFVNDLMRKGKKSIAEGVCYGAFALIEERAKEDPLKTFKKALDNVKPVLEVKSRRVGGATYQVPVEVRQDRRVALGMRWIITYSKARGEKTMQEKLAGEIMDAANNRGNAVKKREDTHKMAEANKAFAHYRW.

Belongs to the universal ribosomal protein uS7 family. Part of the 30S ribosomal subunit. Contacts proteins S9 and S11.

Functionally, one of the primary rRNA binding proteins, it binds directly to 16S rRNA where it nucleates assembly of the head domain of the 30S subunit. Is located at the subunit interface close to the decoding center, probably blocks exit of the E-site tRNA. The polypeptide is Small ribosomal subunit protein uS7 (Myxococcus xanthus (strain DK1622)).